The primary structure comprises 404 residues: 5-aminolevulinate synthase (404 aa).

Substrate-binding residues include arginine 21 and serine 136. Residues serine 188, histidine 216, and threonine 244 each contribute to the pyridoxal 5'-phosphate site. Lysine 247 is an active-site residue. Lysine 247 is modified (N6-(pyridoxal phosphate)lysine). 2 residues coordinate pyridoxal 5'-phosphate: threonine 276 and threonine 277. Threonine 362 provides a ligand contact to substrate.

Belongs to the class-II pyridoxal-phosphate-dependent aminotransferase family. In terms of assembly, homodimer. Requires pyridoxal 5'-phosphate as cofactor.

It catalyses the reaction succinyl-CoA + glycine + H(+) = 5-aminolevulinate + CO2 + CoA. Its pathway is porphyrin-containing compound metabolism; protoporphyrin-IX biosynthesis; 5-aminolevulinate from glycine: step 1/1. The protein is 5-aminolevulinate synthase (hemA) of Rhizobium meliloti (strain 1021) (Ensifer meliloti).